A 77-amino-acid polypeptide reads, in one-letter code: Large ribosomal subunit protein bL28 (77 aa).

Residues methionine 1–lysine 26 form a disordered region.

Belongs to the bacterial ribosomal protein bL28 family.

In Neisseria gonorrhoeae (strain ATCC 700825 / FA 1090), this protein is Large ribosomal subunit protein bL28.